We begin with the raw amino-acid sequence, 73 residues long: uncharacterized protein (73 aa).

A disordered region spans residues 48-73 (AKEPEKKTPSMEAKATSLSPNKASAS). Positions 63-73 (TSLSPNKASAS) are enriched in polar residues.

This is an uncharacterized protein from Saccharomyces cerevisiae (strain ATCC 204508 / S288c) (Baker's yeast).